The primary structure comprises 1122 residues: MSGSRPTQSSEGSRRSRHSARIIAQTTVDAKLHADFEESGSSFDYSTSVRVTGPVVENQPPRSDKVTTTYLHHIQKGKLIQPFGCLLALDEKTFKVIAYSENASELLTMASHAVPSVGEHPVLGIGTDIRSLFTAPSASALQKALGFGDVSLLNPILVHCRTSAKPFYAIIHRVTGSIIIDFEPVKPYEVPMTAAGALQSYKLAAKAITRLQSLPSGSMERLCDTMVQEVFELTGYDRVMAYKFHEDDHGEVVSEVTKPGLEPYLGLHYPATDIPQAARFLFMKNKVRMIVDCNAKHARVLQDEKLSFDLTLCGSTLRAPHSCHLQYMANMDSIASLVMAVVVNEEDGEGDAPDATTQPQKRKRLWGLVVCHNTTPRFVPFPLRYACEFLAQVFAIHVNKEVELDNQMVEKNILRTQTLLCDMLMRDAPLGIVSQSPNIMDLVKCDGAALLYKDKIWKLGTTPSEFHLQEIASWLCEYHMDSTGLSTDSLHDAGFPRALSLGDSVCGMAAVRISSKDMIFWFRSHTAGEVRWGGAKHDPDDRDDARRMHPRSSFKAFLEVVKTRSLPWKDYEMDAIHSLQLILRNAFKDSETTDVNTKVIYSKLNDLKIDGIQELEAVTSEMVRLIETATVPILAVDSDGLVNGWNTKIAELTGLSVDEAIGKHFLTLVEDSSVEIVKRMLENALEGTEEQNVQFEIKTHLSRADAGPISLVVNACASRDLHENVVGVCFVAHDLTGQKTVMDKFTRIEGDYKAIIQNPNPLIPPIFGTDEFGWCTEWNPAMSKLTGLKREEVIDKMLLGEVFGTQKSCCRLKNQEAFVNLGIVLNNAVTSQDPEKVSFAFFTRGGKYVECLLCVSKKLDREGVVTGVFCFLQLASHELQQALHVQRLAERTAVKRLKALAYIKRQIRNPLSGIMFTRKMIEGTELGPEQRRILQTSALCQKQLSKILDDSDLESIIEGCLDLEMKEFTLNEVLTASTSQVMMKSNGKSVRITNETGEEVMSDTLYGDSIRLQQVLADFMLMAVNFTPSGGQLTVSASLRKDQLGRSVHLANLEIRLTHTGAGIPEFLLNQMFGTEEDVSEEGLSLMVSRKLVKLMNGDVQYLRQAGKSSFIITAELAAANK.

A compositionally biased stretch (polar residues) spans 1 to 11; that stretch reads MSGSRPTQSSE. The interval 1–21 is disordered; it reads MSGSRPTQSSEGSRRSRHSAR. The 185-residue stretch at 218–402 folds into the GAF domain; it reads SMERLCDTMV…VFAIHVNKEV (185 aa). C323 is a binding site for phytochromobilin. The PAS 1 domain occupies 618–688; sequence VTSEMVRLIE…RMLENALEGT (71 aa). In terms of domain architecture, PAC spans 695–747; it reads FEIKTHLSRADAGPISLVVNACASRDLHENVVGVCFVAHDLTGQKTVMDKFTR. The PAS 2 domain maps to 748–822; that stretch reads IEGDYKAIIQ…KNQEAFVNLG (75 aa). The region spanning 902–1119 is the Histidine kinase domain; sequence YIKRQIRNPL…SFIITAELAA (218 aa).

It belongs to the phytochrome family. Homodimer. Interacts with NDPK2 and PKS4. Stabilized by interactions with PAPP5 and FYPP3 which are enhanced in the phosphorylated Pfr form. Interacts with COP1/SPA1 complex. Binds, via its photosensory domain, to PTAC12/HMR when photoactivated; this interaction stimulates its localization to photobodies. Interacts with FHY1, FHL and FHY3, especially upon far-red (FR) light illumination; when underphosphorylated. Forms PHYA/FHY1/HFR1 complex. Binds to PIF3/PAP3. Post-translationally, phosphorylated. In terms of processing, contains one covalently linked phytochromobilin chromophore. Expressed in fruits, flowers, leaves, stems, seedlings and roots.

The protein localises to the cytoplasm. It localises to the nucleus. The protein resides in the nucleoplasm. Its subcellular location is the nucleus speckle. In terms of biological role, regulatory photoreceptor which exists in two forms that are reversibly interconvertible by light: the Pr form that absorbs maximally in the red region of the spectrum and the Pfr form that absorbs maximally in the far-red region. Photoconversion of Pr to Pfr induces an array of morphogenetic responses, whereas reconversion of Pfr to Pr cancels the induction of those responses. Pfr controls the expression of a number of nuclear genes including those encoding the small subunit of ribulose-bisphosphate carboxylase, chlorophyll A/B binding protein, protochlorophyllide reductase, rRNA, etc. It also controls the expression of its own gene(s) in a negative feedback fashion. Involved in the flowering time regulation. Can phosphorylate FHY1 and, possibly, FHL, in red light conditions; this inactivates their co-shuttling to the nucleus. Regulates phototropic responses both in the nucleus (e.g. hypocotyl elongation and cotyledon opening under high-irradiance conditions and seed germination under very-low-fluence conditions) and in the cytoplasm (e.g. negative gravitropism in blue light and red-enhanced phototropism). Promotes seed germination, suppression of hypocotyl elongation, and randomization of hypocotyl growth orientation in far-red light; these responses to far-red light are repressed by UNE10/PIF8. Stabilizes UNE10/PIF8 but sequesters PIF3/PAP3 from its target genes promoters in far-red light. The polypeptide is Phytochrome A (Arabidopsis thaliana (Mouse-ear cress)).